Here is a 266-residue protein sequence, read N- to C-terminus: MYVETQEEEPEIKIPLPRVGITNLRTIAKINWKGRIYTFIPTFEVTIDLPREKKGIHMSRLVESITDAMSEAVEEEVKKIHTSLEELALAVIKRLEEKHKHKRAEVWIRTTLILEKTTPASRKLSYEPYDVEVAVIKEGKDVKKRLKVRVIGNTACPHAMANNNGKTHIQRAIGELEVMADFNEEIALEDMIEVVESSFSSPTYTLLKTPDENAVVRKMYENPKFVEDVAREILMKAREKFPGRIHVRVISNESIHKHDVIAEAWA.

It belongs to the GTP cyclohydrolase IV family. In terms of assembly, homodimer. Fe(2+) serves as cofactor.

The enzyme catalyses GTP + H2O = 7,8-dihydroneopterin 2',3'-cyclic phosphate + formate + diphosphate + H(+). It functions in the pathway cofactor biosynthesis; 5,6,7,8-tetrahydromethanopterin biosynthesis. Converts GTP to 7,8-dihydro-D-neopterin 2',3'-cyclic phosphate, the first intermediate in the biosynthesis of coenzyme methanopterin. In Pyrococcus abyssi (strain GE5 / Orsay), this protein is GTP cyclohydrolase MptA.